The following is a 728-amino-acid chain: MADSGSNEEAMKRQAPSVKFDSPSKPDPQQVSQQSNQLSSQKSIQQSTQSKIDPSRIDTKNTTVTTTRPTLDTPPEEEEEKRDGFGNSFEFVLTSLGLAVGLGNIWRFPTRAYNNGGSAFLIPYLTCAFLFGLPAVYFEFLTGQYQGKSPPVIFRRVRPILEGVGWMGVFVAALVAIYYIVIVSWISIYMINICRGHFALWSHCNNDWNNGTSCITMADQYLCKNHTKVMANSTLWNSSLPIPDKMVYFNGACQDANGTDVSTATEQYFMTYIVQPSSGMLDFGGFNWPVFAAMSVCWLLTGLGILKGAKIMGKISYVSVLVPYVLVVVLFINGVFQDGSGVGLEMYFGTPNYTKLYEQDTWTEALKQLCFSLSVGHGGLISLSSYSPKRNNIFRDALIVIIGDTTMSLVGGGAVFATLGYLAKATGQDVKDVVKSGLSLAFVVYPEAMTRMPVPWLWCFIFFLMLFLLGASTEIALVDVFCSCIYDQYPRFRNRKWIVVIAWCSVLYCIGLVFSTRAGYYWFEMFDEYAAGFSSVCTVVCELLVMMYIYGFRNVRDDITEVVGHARNKFTGAIGAHSWYFTANWMVISPSIALILVGLSFVREYPYMGRHDIYPAVFDIFGWFLSFLPVIIVPIFMLLNFIRCRNRGHSYRTLFMLQKQHASYRRIAANYSKDQLALQDQLPDKEPWDEENVDLTDSESESRNAASGDVPIDDVATIDTSSTYHQVY.

At 1-84 (MADSGSNEEA…PEEEEEKRDG (84 aa)) the chain is on the cytoplasmic side. The tract at residues 1–84 (MADSGSNEEA…PEEEEEKRDG (84 aa)) is disordered. 2 stretches are compositionally biased toward low complexity: residues 29 to 50 (QQVS…STQS) and 60 to 73 (KNTT…TLDT). A helical membrane pass occupies residues 85–105 (FGNSFEFVLTSLGLAVGLGNI). Na(+) is bound by residues G97, A99, V100, and N104. The Extracellular segment spans residues 106 to 119 (WRFPTRAYNNGGSA). Residues 120 to 140 (FLIPYLTCAFLFGLPAVYFEF) form a helical membrane-spanning segment. Residues 141–162 (LTGQYQGKSPPVIFRRVRPILE) lie on the Cytoplasmic side of the membrane. Residues 163–183 (GVGWMGVFVAALVAIYYIVIV) traverse the membrane as a helical segment. The Extracellular segment spans residues 184-285 (SWISIYMINI…PSSGMLDFGG (102 aa)). C204 and C214 are joined by a disulfide. N210, N225, N232, N237, and N257 each carry an N-linked (GlcNAc...) asparagine glycan. The chain crosses the membrane as a helical span at residues 286 to 306 (FNWPVFAAMSVCWLLTGLGIL). Residues 307–314 (KGAKIMGK) lie on the Cytoplasmic side of the membrane. A helical transmembrane segment spans residues 315–335 (ISYVSVLVPYVLVVVLFINGV). The Extracellular portion of the chain corresponds to 336–364 (FQDGSGVGLEMYFGTPNYTKLYEQDTWTE). The N-linked (GlcNAc...) asparagine glycan is linked to N352. Residues 365–386 (ALKQLCFSLSVGHGGLISLSSY) traverse the membrane as a helical segment. S372 is a binding site for Na(+). Topologically, residues 387 to 396 (SPKRNNIFRD) are cytoplasmic. The helical transmembrane segment at 397–417 (ALIVIIGDTTMSLVGGGAVFA) threads the bilayer. Topologically, residues 418–451 (TLGYLAKATGQDVKDVVKSGLSLAFVVYPEAMTR) are extracellular. The helical transmembrane segment at 452 to 472 (MPVPWLWCFIFFLMLFLLGAS) threads the bilayer. L469 lines the Na(+) pocket. At 473–495 (TEIALVDVFCSCIYDQYPRFRNR) the chain is on the cytoplasmic side. Residues 496-516 (KWIVVIAWCSVLYCIGLVFST) traverse the membrane as a helical segment. Residues 517–531 (RAGYYWFEMFDEYAA) are Extracellular-facing. The helical transmembrane segment at 532–552 (GFSSVCTVVCELLVMMYIYGF) threads the bilayer. Topologically, residues 553–578 (RNVRDDITEVVGHARNKFTGAIGAHS) are cytoplasmic. The helical transmembrane segment at 579–599 (WYFTANWMVISPSIALILVGL) threads the bilayer. The Extracellular portion of the chain corresponds to 600-616 (SFVREYPYMGRHDIYPA). The chain crosses the membrane as a helical span at residues 617-637 (VFDIFGWFLSFLPVIIVPIFM). Residues 638–728 (LLNFIRCRNR…DTSSTYHQVY (91 aa)) are Cytoplasmic-facing. Residues 687–699 (PWDEENVDLTDSE) are compositionally biased toward acidic residues. The interval 687 to 728 (PWDEENVDLTDSESESRNAASGDVPIDDVATIDTSSTYHQVY) is disordered. Polar residues predominate over residues 718-728 (IDTSSTYHQVY).

This sequence belongs to the sodium:neurotransmitter symporter (SNF) (TC 2.A.22) family. In terms of tissue distribution, expressed in the INT-9 cells and posterior cells of the alimentary canal of the intestine, gut epithelial cells, the pharynx of some worms, two cells of the rectal gland, and in DVA, DVB and DVC neurons and amphid sensory neurons ASI, ADF and ASK neurons.

The protein localises to the cell membrane. Sodium-dependent amino acid transporter that mediates the uptake of the L-enantiomers of various amino acids, including L-proline and L-methionine, and also of acidic amino acids such as L-glutamic acid and L-aspartic acid. May additionally have a role in potassium-dependent amino acid absorption. In response to the availability of amino acid nutrients, may play a role in dauer formation. May play a role in promoting fertility. The polypeptide is Sodium-dependent transporter snf-5 (Caenorhabditis elegans).